We begin with the raw amino-acid sequence, 675 residues long: Rho guanine nucleotide exchange factor 37 (675 aa).

Residues 1 to 26 (MAKHGADEPSSRSGSPDREGRASEDR) form a disordered region. The DH domain occupies 30-213 (HQRLAVRELI…QDVNTNINEY (184 aa)). A BAR domain is found at 254–455 (LKQEAGLIPR…LPHHHVPEPA (202 aa)). 2 SH3 domains span residues 506–569 (GPGK…LYHV) and 602–665 (PTMN…RARS).

In terms of biological role, may act as a guanine nucleotide exchange factor (GEF). The protein is Rho guanine nucleotide exchange factor 37 (ARHGEF37) of Homo sapiens (Human).